Reading from the N-terminus, the 284-residue chain is ATP phosphoribosyltransferase (284 aa).

Belongs to the ATP phosphoribosyltransferase family. Long subfamily. Equilibrium between an active dimeric form, an inactive hexameric form and higher aggregates. Interconversion between the various forms is largely reversible and is influenced by the natural substrates and inhibitors of the enzyme. Requires Mg(2+) as cofactor.

The protein localises to the cytoplasm. The catalysed reaction is 1-(5-phospho-beta-D-ribosyl)-ATP + diphosphate = 5-phospho-alpha-D-ribose 1-diphosphate + ATP. It functions in the pathway amino-acid biosynthesis; L-histidine biosynthesis; L-histidine from 5-phospho-alpha-D-ribose 1-diphosphate: step 1/9. Its activity is regulated as follows. Feedback inhibited by histidine. Functionally, catalyzes the condensation of ATP and 5-phosphoribose 1-diphosphate to form N'-(5'-phosphoribosyl)-ATP (PR-ATP). Has a crucial role in the pathway because the rate of histidine biosynthesis seems to be controlled primarily by regulation of HisG enzymatic activity. The sequence is that of ATP phosphoribosyltransferase from Mycobacterium avium (strain 104).